Here is a 176-residue protein sequence, read N- to C-terminus: Inorganic pyrophosphatase (176 aa).

Lys30, Arg44, and Tyr56 together coordinate substrate. Asp66, Asp71, and Asp103 together coordinate Mg(2+). Tyr142 contacts substrate.

Belongs to the PPase family. Homohexamer. It depends on Mg(2+) as a cofactor.

The protein resides in the cytoplasm. The enzyme catalyses diphosphate + H2O = 2 phosphate + H(+). Catalyzes the hydrolysis of inorganic pyrophosphate (PPi) forming two phosphate ions. The polypeptide is Inorganic pyrophosphatase (Salmonella typhi).